The primary structure comprises 409 residues: Evolutionarily conserved signaling intermediate in Toll pathway, mitochondrial (409 aa).

A mitochondrion-targeting transit peptide spans 1–26 (MLRRAQCLLRLHGNGGHSLVSRFRNY). Disordered regions lie at residues 27–53 (ATDEGNPKQNPNPNPRAQKPGTKNLPA) and 383–409 (EEIEGGASVPATSDNSSQDEHISSRQK). Residues 400–409 (QDEHISSRQK) are compositionally biased toward basic and acidic residues.

Belongs to the ECSIT family. Interacts with Traf6. Associates with mitochondrial complex I assembly intermediates during its biogenesis.

The protein resides in the cytoplasm. Its subcellular location is the nucleus. It localises to the mitochondrion. Its function is as follows. As part of the MCIA complex, involved in the assembly of the mitochondrial complex I. Involved in the innate immune response; promotes the production of antibacterial peptides. The protein is Evolutionarily conserved signaling intermediate in Toll pathway, mitochondrial of Drosophila melanogaster (Fruit fly).